Here is a 349-residue protein sequence, read N- to C-terminus: ATPase GET3 (349 aa).

26–33 (KGGVGKTT) serves as a coordination point for ATP. The active site involves Asp57. Positions 240 and 267 each coordinate ATP. The Zn(2+) site is built by Cys280 and Cys283.

It belongs to the arsA ATPase family. In terms of assembly, homodimer. Component of the Golgi to ER traffic (GET) complex, which is composed of GET1, GET2 and GET3. Within the complex, GET1 and GET2 form a heterotetramer which is stabilized by phosphatidylinositol binding and which binds to the GET3 homodimer. Interacts with the chloride channel protein GEF1.

The protein localises to the cytoplasm. Its subcellular location is the endoplasmic reticulum. It is found in the golgi apparatus. In terms of biological role, ATPase required for the post-translational delivery of tail-anchored (TA) proteins to the endoplasmic reticulum. Recognizes and selectively binds the transmembrane domain of TA proteins in the cytosol. This complex then targets to the endoplasmic reticulum by membrane-bound receptors GET1 and GET2, where the tail-anchored protein is released for insertion. This process is regulated by ATP binding and hydrolysis. ATP binding drives the homodimer towards the closed dimer state, facilitating recognition of newly synthesized TA membrane proteins. ATP hydrolysis is required for insertion. Subsequently, the homodimer reverts towards the open dimer state, lowering its affinity for the GET1-GET2 receptor, and returning it to the cytosol to initiate a new round of targeting. Cooperates with the HDEL receptor ERD2 to mediate the ATP-dependent retrieval of resident ER proteins that contain a C-terminal H-D-E-L retention signal from the Golgi to the ER. Involved in low-level resistance to the oxyanions arsenite and arsenate, and in heat tolerance. The protein is ATPase GET3 of Lachancea thermotolerans (strain ATCC 56472 / CBS 6340 / NRRL Y-8284) (Yeast).